The chain runs to 406 residues: uncharacterized protein (406 aa).

This is an uncharacterized protein from Escherichia coli (strain K12).